The following is a 466-amino-acid chain: Reticulophagy regulator 3 (466 aa).

Topologically, residues Met1 to Trp80 are cytoplasmic. Ser26 is subject to Phosphoserine. Residues Phe81 to Val101 traverse the membrane as a helical segment. At Cys102 to Lys168 the chain is on the lumenal side. A helical membrane pass occupies residues Phe169–Ile187. Residues Pro188–Leu192 are Cytoplasmic-facing. The chain crosses the membrane as a helical span at residues Ser193–Leu211. Residues Trp212–Glu381 lie on the Lumenal side of the membrane. Residues Arg244–Glu263 form a disordered region. Over residues Leu248–Asp259 the composition is skewed to basic and acidic residues. Residue Thr254 is modified to Phosphothreonine. 2 positions are modified to phosphoserine: Ser258 and Ser260. Thr283 carries the phosphothreonine modification. Phosphoserine is present on residues Ser285, Ser288, Ser293, and Ser303. The tract at residues Ser285–Ser335 is disordered. Over residues Cys294–Thr310 the composition is skewed to polar residues. Residues Thr307 and Thr310 each carry the phosphothreonine modification. 3 positions are modified to phosphoserine: Ser313, Ser320, and Ser360. A compositionally biased stretch (basic and acidic residues) spans Leu316–Pro331. The chain crosses the membrane as a helical span at residues Leu382–Val401. At Ser402–His466 the chain is on the cytoplasmic side. A disordered region spans residues Glu412–Gly444. Thr440 bears the Phosphothreonine mark. The LIR motif motif lies at Asp445–Leu450.

This sequence belongs to the RETREG family. As to quaternary structure, interacts with ATG8 family modifier proteins MAP1LC3A, MAP1LC3B, GABARAPL1 and GABARAPL2. Also interacts with ATG8 family modifier protein GABARAP. Interacts with CANX. Interacts with RTN4 isoform B. As to expression, widely expressed with highest levels in brain, lung, liver, muscle and spleen (protein level). Mainly expressed in the central nervous system and in parenchymatous organs including liver, lung and kidney.

Its subcellular location is the endoplasmic reticulum membrane. Endoplasmic reticulum (ER)-anchored autophagy regulator which exists in an inactive state under basal conditions but is activated following cellular stress. When activated, induces ER fragmentation and mediates ER delivery into lysosomes through sequestration into autophagosomes via interaction with ATG8 family proteins. Promotes ER membrane curvature and ER tubulation required for subsequent ER fragmentation and engulfment into autophagosomes. Required for collagen quality control in a LIR motif-dependent manner. Mediates NRF1-enhanced neurite outgrowth. This is Reticulophagy regulator 3 (Retreg3) from Mus musculus (Mouse).